A 361-amino-acid chain; its full sequence is MDEEEAMLLLKEEDEGTRRTSVPTQLMKLKRTHWWILVFISIFFLISAQAIAVLLGRFYYNEGGNSKWISTLVQTCGFPILYLPLCFLPASHSSSSSCSFKTLVWIYLSLGFAIGLDNLLYSFGLLYLSASTYSILCSSQLAFNGVFSYYINSQKITCLILFSVLFLSVSAVLVSLDDDSNSPSGDSKWSYLIGCLCTVFASLIYSLQLSLMQFSFENVLKSETFSMVLEMQIYTSLVASCVAVIGLFASGEWMLLSVEMEEFHEGQVIYVLTLVGTAVSWQLGSVGAVALIFLVSSLFSNLIGTLSLIVTPLAAIAVFHDKLTEVKMVAMLIAFMGFGFYIYQNYLDDLKVQRAREAQAE.

Transmembrane regions (helical) follow at residues 35-55, 68-88, 103-123, 129-151, 156-176, 192-212, 238-258, 268-288, 289-309, and 323-343; these read WILV…AVLL, WIST…LCFL, LVWI…LYSF, SAST…SYYI, ITCL…LVSL, LIGC…LSLM, VASC…LLSV, VIYV…SVGA, VALI…LSLI, and LTEV…FYIY.

Belongs to the purine permeases (TC 2.A.7.14) family.

Its subcellular location is the membrane. This chain is Probable purine permease 13 (PUP13), found in Arabidopsis thaliana (Mouse-ear cress).